Here is a 279-residue protein sequence, read N- to C-terminus: Large ribosomal subunit protein uL2 (279 aa).

The disordered stretch occupies residues 227 to 279 (GVAMNPVDHPMGGGEGKTSGGRHPVSPWGFPTKGKKTRDPNKLSSKFIKSKKR).

This sequence belongs to the universal ribosomal protein uL2 family. Part of the 50S ribosomal subunit. Forms a bridge to the 30S subunit in the 70S ribosome.

One of the primary rRNA binding proteins. Required for association of the 30S and 50S subunits to form the 70S ribosome, for tRNA binding and peptide bond formation. It has been suggested to have peptidyltransferase activity; this is somewhat controversial. Makes several contacts with the 16S rRNA in the 70S ribosome. This chain is Large ribosomal subunit protein uL2, found in Neorickettsia sennetsu (strain ATCC VR-367 / Miyayama) (Ehrlichia sennetsu).